The primary structure comprises 183 residues: Dual-action ribosomal maturation protein DarP (183 aa).

Belongs to the DarP family.

Its subcellular location is the cytoplasm. In terms of biological role, member of a network of 50S ribosomal subunit biogenesis factors which assembles along the 30S-50S interface, preventing incorrect 23S rRNA structures from forming. Promotes peptidyl transferase center (PTC) maturation. The chain is Dual-action ribosomal maturation protein DarP from Salmonella gallinarum (strain 287/91 / NCTC 13346).